Consider the following 130-residue polypeptide: Small ribosomal subunit protein uS9 (130 aa).

The protein belongs to the universal ribosomal protein uS9 family.

This chain is Small ribosomal subunit protein uS9, found in Bordetella avium (strain 197N).